The primary structure comprises 102 residues: ATP-dependent Clp protease adapter protein ClpS (102 aa).

Belongs to the ClpS family. As to quaternary structure, binds to the N-terminal domain of the chaperone ClpA.

Involved in the modulation of the specificity of the ClpAP-mediated ATP-dependent protein degradation. This chain is ATP-dependent Clp protease adapter protein ClpS, found in Aromatoleum aromaticum (strain DSM 19018 / LMG 30748 / EbN1) (Azoarcus sp. (strain EbN1)).